A 472-amino-acid chain; its full sequence is Cysteine--tRNA ligase (472 aa).

Cysteine 27 lines the Zn(2+) pocket. Residues 29–39 carry the 'HIGH' region motif; sequence PTVYNLIHIGN. Positions 214, 239, and 243 each coordinate Zn(2+). Positions 271-275 match the 'KMSKS' region motif; sequence KMSKS. Lysine 274 is an ATP binding site.

The protein belongs to the class-I aminoacyl-tRNA synthetase family. Monomer. It depends on Zn(2+) as a cofactor.

It localises to the cytoplasm. It catalyses the reaction tRNA(Cys) + L-cysteine + ATP = L-cysteinyl-tRNA(Cys) + AMP + diphosphate. The polypeptide is Cysteine--tRNA ligase (Lachnospira eligens (strain ATCC 27750 / DSM 3376 / VPI C15-48 / C15-B4) (Eubacterium eligens)).